A 693-amino-acid chain; its full sequence is Probable L-type lectin-domain containing receptor kinase VI.1 (693 aa).

Positions 1–22 are cleaved as a signal peptide; that stretch reads MGIARSINSFMFFFFLMILSNA. N-linked (GlcNAc...) asparagine glycosylation is found at Asn21, Asn44, Asn71, Asn89, Asn141, Asn180, and Asn223. Residues 23–311 are Extracellular-facing; that stretch reads SKSSVLAEAT…SNKKGYNSQV (289 aa). A legume-lectin like region spans residues 33–279; sequence TAKFTFIGFK…AHYVMGWSFS (247 aa). Residues 312–332 traverse the membrane as a helical segment; sequence IVLIVALSIVTLVLLVLLFIF. The Cytoplasmic segment spans residues 333-693; it reads VMYKRRIQEE…VSSSSIVSGR (361 aa). A Protein kinase domain is found at 368–642; the sequence is FKESEIIGTG…LRYLNGEENV (275 aa). Residues 374–382 and Lys396 each bind ATP; that span reads IGTGGFGIV. The active-site Proton acceptor is the Asp495. Positions 670–693 are disordered; sequence DRASSSNTFSSFSNVSSSSIVSGR.

The protein in the C-terminal section; belongs to the protein kinase superfamily. Ser/Thr protein kinase family. This sequence in the N-terminal section; belongs to the leguminous lectin family.

The protein resides in the cell membrane. The enzyme catalyses L-seryl-[protein] + ATP = O-phospho-L-seryl-[protein] + ADP + H(+). It carries out the reaction L-threonyl-[protein] + ATP = O-phospho-L-threonyl-[protein] + ADP + H(+). The protein is Probable L-type lectin-domain containing receptor kinase VI.1 (LECRK61) of Arabidopsis thaliana (Mouse-ear cress).